A 354-amino-acid chain; its full sequence is Protein-arginine kinase (354 aa).

A Phosphagen kinase C-terminal domain is found at 24-254; it reads IVLSSRIRLA…QQIIQQEKMA (231 aa). ATP contacts are provided by residues 27–31, His92, Arg125, 176–180, and 207–212; these read SSRIR, RASVM, and RGIYGE. An RDXXRA motif of the pArg binding pocket involved in allosteric regulation motif is present at residues 337 to 342; it reads RDYRRA.

This sequence belongs to the ATP:guanido phosphotransferase family.

It catalyses the reaction L-arginyl-[protein] + ATP = N(omega)-phospho-L-arginyl-[protein] + ADP + H(+). Its activity is regulated as follows. Appears to be allosterically activated by the binding of pArg-containing polypeptides to the pArg-binding pocket localized in the C-terminal domain of McsB. Its function is as follows. Catalyzes the specific phosphorylation of arginine residues in a large number of proteins. Is part of the bacterial stress response system. Protein arginine phosphorylation has a physiologically important role and is involved in the regulation of many critical cellular processes, such as protein homeostasis, motility, competence, and stringent and stress responses, by regulating gene expression and protein activity. This chain is Protein-arginine kinase, found in Bacillus anthracis (strain A0248).